The sequence spans 316 residues: Olfactory receptor 12D3 (316 aa).

At 1–23 the chain is on the extracellular side; the sequence is MENVTTMNEFLLLGLTGVQELQP. N-linked (GlcNAc...) asparagine glycosylation occurs at Asn-3. A helical transmembrane segment spans residues 24–44; it reads FFFGIFLIIYLINLIGNGSIL. The Cytoplasmic portion of the chain corresponds to 45 to 52; the sequence is VMVVLEPQ. Residues 53-73 traverse the membrane as a helical segment; the sequence is LHSPMYFFLGNLSCLDISYSS. At 74 to 97 the chain is on the extracellular side; the sequence is VTLPKLLVNLVCSRRAISFLGCIT. A disulfide bridge links Cys-95 with Cys-187. Residues 98-118 traverse the membrane as a helical segment; that stretch reads QLHFFHFLGSTEAILLAIMAF. Over 119–137 the chain is Cytoplasmic; sequence DRFVAICNPLRYTVIMNPQ. A helical transmembrane segment spans residues 138–158; that stretch reads VCILLAAAAWLISFFYALMHS. Residues 159–195 lie on the Extracellular side of the membrane; the sequence is VMTAHLSFCGSQKLNHFFYDVKPLLELACSDTLLNQW. The helical transmembrane segment at 196 to 215 threads the bilayer; sequence LLSIVTGSISMGAFFLTLLS. Residues 216–236 lie on the Cytoplasmic side of the membrane; sequence CFYVIGFLLFKNRSCRILHKA. Residues 237 to 257 form a helical membrane-spanning segment; that stretch reads LSTCASHFMVVCLFYGPVGFT. Over 258–270 the chain is Extracellular; sequence YIRPASATSMIQD. The chain crosses the membrane as a helical span at residues 271–291; sequence RIMAIMYSAVTPVLNPLIYTL. The Cytoplasmic segment spans residues 292-316; the sequence is RNKEVMMALKKIFGRKLFKDWQQHH.

It belongs to the G-protein coupled receptor 1 family.

It is found in the cell membrane. Functionally, odorant receptor. The protein is Olfactory receptor 12D3 (OR12D3) of Homo sapiens (Human).